The sequence spans 245 residues: 1-(5-phosphoribosyl)-5-[(5-phosphoribosylamino)methylideneamino] imidazole-4-carboxamide isomerase (245 aa).

Aspartate 15 functions as the Proton acceptor in the catalytic mechanism. The active-site Proton donor is the aspartate 135.

The protein belongs to the HisA/HisF family.

It localises to the cytoplasm. It carries out the reaction 1-(5-phospho-beta-D-ribosyl)-5-[(5-phospho-beta-D-ribosylamino)methylideneamino]imidazole-4-carboxamide = 5-[(5-phospho-1-deoxy-D-ribulos-1-ylimino)methylamino]-1-(5-phospho-beta-D-ribosyl)imidazole-4-carboxamide. It participates in amino-acid biosynthesis; L-histidine biosynthesis; L-histidine from 5-phospho-alpha-D-ribose 1-diphosphate: step 4/9. In Haloquadratum walsbyi (strain DSM 16790 / HBSQ001), this protein is 1-(5-phosphoribosyl)-5-[(5-phosphoribosylamino)methylideneamino] imidazole-4-carboxamide isomerase.